Here is a 114-residue protein sequence, read N- to C-terminus: Large ribosomal subunit protein bL20 (114 aa).

The protein belongs to the bacterial ribosomal protein bL20 family.

Binds directly to 23S ribosomal RNA and is necessary for the in vitro assembly process of the 50S ribosomal subunit. It is not involved in the protein synthesizing functions of that subunit. The chain is Large ribosomal subunit protein bL20 from Flavobacterium psychrophilum (strain ATCC 49511 / DSM 21280 / CIP 103535 / JIP02/86).